A 187-amino-acid chain; its full sequence is Large ribosomal subunit protein uL6c (187 aa).

The protein belongs to the universal ribosomal protein uL6 family. In terms of assembly, part of the 50S ribosomal subunit.

It is found in the plastid. It localises to the chloroplast. Functionally, binds 23S rRNA. The sequence is that of Large ribosomal subunit protein uL6c (rpl6) from Thalassiosira pseudonana (Marine diatom).